Here is a 228-residue protein sequence, read N- to C-terminus: RNA chaperone ProQ (228 aa).

The interval 105 to 178 (EAKARVQAQR…REEQHTPVSD (74 aa)) is disordered. Basic and acidic residues-rich tracts occupy residues 117 to 136 (QQAKKREAAAAAGEKEDAPR) and 146 to 173 (RRKETTPRTPRAEKPAAKAPRAPREEQH).

Belongs to the ProQ family.

The protein resides in the cytoplasm. Its function is as follows. RNA chaperone with significant RNA binding, RNA strand exchange and RNA duplexing activities. May regulate ProP activity through an RNA-based, post-transcriptional mechanism. The sequence is that of RNA chaperone ProQ from Citrobacter koseri (strain ATCC BAA-895 / CDC 4225-83 / SGSC4696).